The chain runs to 119 residues: Holo-[acyl-carrier-protein] synthase (119 aa).

The Mg(2+) site is built by D8 and E58.

It belongs to the P-Pant transferase superfamily. AcpS family. Requires Mg(2+) as cofactor.

The protein localises to the cytoplasm. The catalysed reaction is apo-[ACP] + CoA = holo-[ACP] + adenosine 3',5'-bisphosphate + H(+). In terms of biological role, transfers the 4'-phosphopantetheine moiety from coenzyme A to a Ser of acyl-carrier-protein. In Lactobacillus johnsonii (strain CNCM I-12250 / La1 / NCC 533), this protein is Holo-[acyl-carrier-protein] synthase.